Consider the following 38-residue polypeptide: Large ribosomal subunit protein bL36 (38 aa).

Belongs to the bacterial ribosomal protein bL36 family.

This is Large ribosomal subunit protein bL36 from Cellvibrio japonicus (strain Ueda107) (Pseudomonas fluorescens subsp. cellulosa).